We begin with the raw amino-acid sequence, 269 residues long: Phosphonoacetaldehyde hydrolase (269 aa).

Aspartate 10 serves as the catalytic Nucleophile. Positions 10 and 12 each coordinate Mg(2+). The active-site Schiff-base intermediate with substrate is the lysine 52. Aspartate 186 is a binding site for Mg(2+).

The protein belongs to the HAD-like hydrolase superfamily. PhnX family. In terms of assembly, homodimer. Mg(2+) serves as cofactor.

The enzyme catalyses phosphonoacetaldehyde + H2O = acetaldehyde + phosphate + H(+). Functionally, involved in phosphonate degradation. The chain is Phosphonoacetaldehyde hydrolase (phnX) from Salmonella typhimurium (strain LT2 / SGSC1412 / ATCC 700720).